A 293-amino-acid chain; its full sequence is Fructose-bisphosphate aldolase (293 aa).

D-glyceraldehyde 3-phosphate is bound at residue Ser-50. The Proton donor role is filled by Asp-85. Zn(2+) is bound by residues His-86, Asp-106, Glu-136, and His-178. A dihydroxyacetone phosphate-binding site is contributed by Gly-179. His-208 serves as a coordination point for Zn(2+). Dihydroxyacetone phosphate-binding positions include Gly-209–Ser-211 and Asn-230–Thr-233.

This sequence belongs to the class II fructose-bisphosphate aldolase family. Zn(2+) serves as cofactor.

The enzyme catalyses beta-D-fructose 1,6-bisphosphate = D-glyceraldehyde 3-phosphate + dihydroxyacetone phosphate. Its pathway is carbohydrate degradation; glycolysis; D-glyceraldehyde 3-phosphate and glycerone phosphate from D-glucose: step 4/4. Functionally, catalyzes the aldol condensation of dihydroxyacetone phosphate (DHAP or glycerone-phosphate) with glyceraldehyde 3-phosphate (G3P) to form fructose 1,6-bisphosphate (FBP) in gluconeogenesis and the reverse reaction in glycolysis. In Streptococcus pyogenes serotype M6 (strain ATCC BAA-946 / MGAS10394), this protein is Fructose-bisphosphate aldolase (fba).